Here is a 249-residue protein sequence, read N- to C-terminus: Flavodoxin/ferredoxin--NADP reductase (249 aa).

In terms of domain architecture, FAD-binding FR-type spans 2-102 (NTWITAKIIK…KKSYGFFTLN (101 aa)). FAD contacts are provided by residues 51 to 54 (RAYS), Y67, 75 to 77 (QLT), and T117. Residues 144-145 (VR), 174-175 (SR), R185, and 215-217 (NPD) contribute to the NADP(+) site. 248 to 249 (YW) serves as a coordination point for FAD.

The protein belongs to the ferredoxin--NADP reductase type 1 family. The cofactor is FAD.

It is found in the cytoplasm. It carries out the reaction 2 reduced [2Fe-2S]-[ferredoxin] + NADP(+) + H(+) = 2 oxidized [2Fe-2S]-[ferredoxin] + NADPH. The enzyme catalyses reduced [flavodoxin] + NADP(+) = oxidized [flavodoxin] + NADPH + 2 H(+). Functionally, transports electrons between flavodoxin or ferredoxin and NADPH. The chain is Flavodoxin/ferredoxin--NADP reductase (fpr) from Buchnera aphidicola subsp. Baizongia pistaciae (strain Bp).